A 295-amino-acid chain; its full sequence is Ribosomal RNA small subunit methyltransferase A (295 aa).

Asn31, Leu33, Gly58, Glu79, Asp104, and Asn129 together coordinate S-adenosyl-L-methionine.

The protein belongs to the class I-like SAM-binding methyltransferase superfamily. rRNA adenine N(6)-methyltransferase family. RsmA subfamily.

It localises to the cytoplasm. It catalyses the reaction adenosine(1518)/adenosine(1519) in 16S rRNA + 4 S-adenosyl-L-methionine = N(6)-dimethyladenosine(1518)/N(6)-dimethyladenosine(1519) in 16S rRNA + 4 S-adenosyl-L-homocysteine + 4 H(+). Specifically dimethylates two adjacent adenosines (A1518 and A1519) in the loop of a conserved hairpin near the 3'-end of 16S rRNA in the 30S particle. May play a critical role in biogenesis of 30S subunits. This is Ribosomal RNA small subunit methyltransferase A from Enterococcus faecalis (strain ATCC 700802 / V583).